The primary structure comprises 180 residues: Large ribosomal subunit protein uL5 (180 aa).

The protein belongs to the universal ribosomal protein uL5 family. Part of the 50S ribosomal subunit; part of the 5S rRNA/L5/L18/L25 subcomplex. Contacts the 5S rRNA and the P site tRNA. Forms a bridge to the 30S subunit in the 70S ribosome.

In terms of biological role, this is one of the proteins that bind and probably mediate the attachment of the 5S RNA into the large ribosomal subunit, where it forms part of the central protuberance. In the 70S ribosome it contacts protein S13 of the 30S subunit (bridge B1b), connecting the 2 subunits; this bridge is implicated in subunit movement. Contacts the P site tRNA; the 5S rRNA and some of its associated proteins might help stabilize positioning of ribosome-bound tRNAs. This is Large ribosomal subunit protein uL5 from Streptococcus pyogenes serotype M49 (strain NZ131).